The sequence spans 899 residues: MAEPPDAATPKTSPYLKGDELSSDSGPLLSIFALQEIMQKVRQAKSEYMAATKDVDLTIPDVQKIIDGVKELASETIYKVVNKPLISYRHIVMQSRDRFLRVDTYYERMSEVGDKIDENEPAKFYETVIKKVRHLRTEGAFVLHNIPTRDHRGMEIADPEILGVDVKSILPVLTAEHRAMVQHILDGAIIENGIVATRDVDVYFGACSESVYRIYNRLQGYIEAVQLEELRAAITWLERLGRRKRMTFSQEFLTDFRRADTIWVLALQLPANPRVIWQVPRCSIANLIMNIATCLPTGEYVSPNPRIASITLTQRITTTGPFAILTGSTPTAQQLDDVRKIYLALMFPGQIVLDLKIDPGERMDPAVRMVAGVVGHLMFTAGPRFTNITQNMARQLDIALADFLLYMYNTRIQVQYGPTGEPLDFRIGRGQYDCNAFRTNFQTGAGYNGWGLVDVENREPAPYDHVQRFIRYCNIDSRELIHPATFGIGMNYYCYNEMLRMLVAAGKDTEAAFFRNMLPFHMVRFARINQIINEDLHSAFSMPDDQFNVLLANMIAGAQERMDPVVLDISWISIWYAFNRSFEPTRRNEMLESAPLIESVYASELTVMKIDMQQMALLQRRFPDVLIEARPTHFWKAVMEVSPEPVRAIMDLAHSHSFINIRDMMRWIGLPSMQPSMKLVLEEEAWAVANDFEELMLTDQVYMFRDMLPEPRLDDIERFRQEGFYYTNMLDGPPTIDRVVQYTYEVARLQANMGQLRAALRRIMDEEGWVRFGGVLRTVRVKFFDSRPPEEILQALPFDYQTSEKGGLTYATIKYANDTTIYYLIYNVEYSNLPDSLVLINPTYVMTKVFINKRIVERVRVGQALAVMNKRFIAYKGKMRIMDITQALKVGTKLAAPTV.

The tract at residues 1 to 22 is disordered; the sequence is MAEPPDAATPKTSPYLKGDELS.

It belongs to the orbivirus VP3 family.

The protein resides in the virion. Its function is as follows. The VP3 protein is one of the five proteins (with VP1, VP4, VP6 and VP7) which form the inner capsid of the virus. This is Core protein VP3 (Segment-3) from Antilocapra americana (Pronghorn).